The following is a 548-amino-acid chain: CTP synthase (548 aa).

The segment at 1 to 270 (MTKYVFVTGG…DNIVCEALGL (270 aa)) is amidoligase domain. Ser13 lines the CTP pocket. Residue Ser13 coordinates UTP. ATP is bound by residues 14–19 (SLGKGI) and Asp71. Mg(2+)-binding residues include Asp71 and Glu144. CTP contacts are provided by residues 151–153 (DIE), 191–196 (KTKPTQ), and Lys227. Residues 191–196 (KTKPTQ) and Lys227 contribute to the UTP site. Residues 295–545 (TIGMVGKYVD…IEAAIANHAR (251 aa)) form the Glutamine amidotransferase type-1 domain. Gly356 contacts L-glutamine. The active-site Nucleophile; for glutamine hydrolysis is the Cys383. L-glutamine contacts are provided by residues 384–387 (LGMQ), Glu407, and Arg473. Residues His518 and Glu520 contribute to the active site.

Belongs to the CTP synthase family. As to quaternary structure, homotetramer.

The enzyme catalyses UTP + L-glutamine + ATP + H2O = CTP + L-glutamate + ADP + phosphate + 2 H(+). It carries out the reaction L-glutamine + H2O = L-glutamate + NH4(+). It catalyses the reaction UTP + NH4(+) + ATP = CTP + ADP + phosphate + 2 H(+). It participates in pyrimidine metabolism; CTP biosynthesis via de novo pathway; CTP from UDP: step 2/2. With respect to regulation, allosterically activated by GTP, when glutamine is the substrate; GTP has no effect on the reaction when ammonia is the substrate. The allosteric effector GTP functions by stabilizing the protein conformation that binds the tetrahedral intermediate(s) formed during glutamine hydrolysis. Inhibited by the product CTP, via allosteric rather than competitive inhibition. Functionally, catalyzes the ATP-dependent amination of UTP to CTP with either L-glutamine or ammonia as the source of nitrogen. Regulates intracellular CTP levels through interactions with the four ribonucleotide triphosphates. The polypeptide is CTP synthase (Bordetella petrii (strain ATCC BAA-461 / DSM 12804 / CCUG 43448)).